The chain runs to 315 residues: Aspartate carbamoyltransferase catalytic subunit (315 aa).

Residues Arg65 and Thr66 each contribute to the carbamoyl phosphate site. Lys93 contributes to the L-aspartate binding site. Carbamoyl phosphate-binding residues include Arg115, His145, and Gln148. The L-aspartate site is built by Arg179 and Arg234. Carbamoyl phosphate-binding residues include Gly275 and Pro276.

It belongs to the aspartate/ornithine carbamoyltransferase superfamily. ATCase family. Heterododecamer (2C3:3R2) of six catalytic PyrB chains organized as two trimers (C3), and six regulatory PyrI chains organized as three dimers (R2).

It catalyses the reaction carbamoyl phosphate + L-aspartate = N-carbamoyl-L-aspartate + phosphate + H(+). It functions in the pathway pyrimidine metabolism; UMP biosynthesis via de novo pathway; (S)-dihydroorotate from bicarbonate: step 2/3. Its function is as follows. Catalyzes the condensation of carbamoyl phosphate and aspartate to form carbamoyl aspartate and inorganic phosphate, the committed step in the de novo pyrimidine nucleotide biosynthesis pathway. This Xanthomonas axonopodis pv. citri (strain 306) protein is Aspartate carbamoyltransferase catalytic subunit.